A 215-amino-acid polypeptide reads, in one-letter code: Myelin protein zero-like protein 2 (215 aa).

Positions 1-26 (MYGKSPTRAVLFLLGLQLTALWPTAA) are cleaved as a signal peptide. The Ig-like V-type domain maps to 27 to 141 (VEIYTPRVLE…DGLIGEIQLS (115 aa)). Residues 27 to 154 (VEIYTPRVLE…TVRFSEIHFL (128 aa)) are Extracellular-facing. N-linked (GlcNAc...) asparagine glycosylation is found at N39 and N118. The cysteines at positions 47 and 123 are disulfide-linked. Residues 155-175 (ALAIGSACALMVIIVIVVVLF) form a helical membrane-spanning segment. The Cytoplasmic portion of the chain corresponds to 176 to 215 (QHFRKKRRAERAHRVVEIKSKEEEKLNQEKKASVSLEYTD).

Belongs to the myelin P0 protein family.

The protein localises to the membrane. Functionally, mediates homophilic cell-cell adhesion. The sequence is that of Myelin protein zero-like protein 2 (MPZL2) from Bos taurus (Bovine).